A 222-amino-acid polypeptide reads, in one-letter code: PLASMODESMATA CALLOSE-BINDING PROTEIN 4 (222 aa).

Residues 1–19 (MSVLLPLCLIISMFTYSNA) form the signal peptide. A disulfide bond links cysteine 22 and cysteine 83. The span at 88–187 (AASPSTTPPS…SVFPGTTLGP (100 aa)) shows a compositional bias: low complexity. Positions 88-199 (AASPSTTPPS…SGGLGDPNAG (112 aa)) are disordered. The GPI-anchor amidated asparagine moiety is linked to residue asparagine 197. Residues 198–222 (AGEKLSVRTNTVVFLLTGVAAMLVI) constitute a propeptide, removed in mature form.

Contains two additional disulfide bonds.

Its subcellular location is the cell membrane. The protein resides in the cell junction. It is found in the plasmodesma. This chain is PLASMODESMATA CALLOSE-BINDING PROTEIN 4 (PDCB4), found in Arabidopsis thaliana (Mouse-ear cress).